Here is a 156-residue protein sequence, read N- to C-terminus: SsrA-binding protein (156 aa).

Positions 135–156 are disordered; sequence HALRERQDRREADRAMSERKDR.

Belongs to the SmpB family.

It localises to the cytoplasm. In terms of biological role, required for rescue of stalled ribosomes mediated by trans-translation. Binds to transfer-messenger RNA (tmRNA), required for stable association of tmRNA with ribosomes. tmRNA and SmpB together mimic tRNA shape, replacing the anticodon stem-loop with SmpB. tmRNA is encoded by the ssrA gene; the 2 termini fold to resemble tRNA(Ala) and it encodes a 'tag peptide', a short internal open reading frame. During trans-translation Ala-aminoacylated tmRNA acts like a tRNA, entering the A-site of stalled ribosomes, displacing the stalled mRNA. The ribosome then switches to translate the ORF on the tmRNA; the nascent peptide is terminated with the 'tag peptide' encoded by the tmRNA and targeted for degradation. The ribosome is freed to recommence translation, which seems to be the essential function of trans-translation. This is SsrA-binding protein from Kineococcus radiotolerans (strain ATCC BAA-149 / DSM 14245 / SRS30216).